The sequence spans 105 residues: Large ribosomal subunit protein eL42 (105 aa).

The interval 23 to 52 is disordered; it reads KVTQYKKGKESRLAQGRRRYDSKQKGFGGQ. Over residues 29–46 the composition is skewed to basic and acidic residues; sequence KGKESRLAQGRRRYDSKQ.

It belongs to the eukaryotic ribosomal protein eL42 family.

This Brugia malayi (Filarial nematode worm) protein is Large ribosomal subunit protein eL42 (rpl-44).